The chain runs to 857 residues: Alanine--tRNA ligase (857 aa).

Positions 556, 560, 658, and 662 each coordinate Zn(2+).

This sequence belongs to the class-II aminoacyl-tRNA synthetase family. Requires Zn(2+) as cofactor.

It localises to the cytoplasm. It catalyses the reaction tRNA(Ala) + L-alanine + ATP = L-alanyl-tRNA(Ala) + AMP + diphosphate. Its function is as follows. Catalyzes the attachment of alanine to tRNA(Ala) in a two-step reaction: alanine is first activated by ATP to form Ala-AMP and then transferred to the acceptor end of tRNA(Ala). Also edits incorrectly charged Ser-tRNA(Ala) and Gly-tRNA(Ala) via its editing domain. The polypeptide is Alanine--tRNA ligase (Sulfurovum sp. (strain NBC37-1)).